The primary structure comprises 243 residues: tRNA (guanine-N(1)-)-methyltransferase (243 aa).

S-adenosyl-L-methionine contacts are provided by residues G108 and 127 to 132; that span reads LGDYVL.

It belongs to the RNA methyltransferase TrmD family. Homodimer.

Its subcellular location is the cytoplasm. It catalyses the reaction guanosine(37) in tRNA + S-adenosyl-L-methionine = N(1)-methylguanosine(37) in tRNA + S-adenosyl-L-homocysteine + H(+). Specifically methylates guanosine-37 in various tRNAs. This chain is tRNA (guanine-N(1)-)-methyltransferase, found in Streptococcus gordonii (strain Challis / ATCC 35105 / BCRC 15272 / CH1 / DL1 / V288).